The primary structure comprises 96 residues: DNA-directed RNA polymerase subunit Rpo11 (96 aa).

It belongs to the archaeal Rpo11/eukaryotic RPB11/RPC19 RNA polymerase subunit family. In terms of assembly, part of the RNA polymerase complex.

Its subcellular location is the cytoplasm. The catalysed reaction is RNA(n) + a ribonucleoside 5'-triphosphate = RNA(n+1) + diphosphate. DNA-dependent RNA polymerase (RNAP) catalyzes the transcription of DNA into RNA using the four ribonucleoside triphosphates as substrates. The protein is DNA-directed RNA polymerase subunit Rpo11 of Methanococcus maripaludis (strain DSM 14266 / JCM 13030 / NBRC 101832 / S2 / LL).